The following is a 436-amino-acid chain: Transcription factor MYB124 (436 aa).

The span at 1-11 (MEDTKKKKKKN) shows a compositional bias: basic residues. The disordered stretch occupies residues 1-23 (MEDTKKKKKKNINNNQDSKKKER). The short motif at 8-15 (KKKNINNN) is the Nuclear localization signal 1 element. HTH myb-type domains follow at residues 20-71 (KKER…YTYL) and 72-126 (NSDF…KKRA). DNA-binding regions (H-T-H motif) lie at residues 48–71 (WAIIASKFKDKSTRQCRRRWYTYL) and 99–122 (WTEIAKVVSGRTDNAVKNRFTTLC). A Nuclear localization signal 2 motif is present at residues 151 to 158 (PRKSENET). The disordered stretch occupies residues 309 to 328 (SWRQPDLHDSPASSEYSSGS). A compositionally biased stretch (polar residues) spans 319–328 (PASSEYSSGS).

In terms of assembly, interacts with RBR1. In terms of tissue distribution, expressed in all shoot organs with higher levels in leaves, stems, flowers, siliques and floral buds. Also detected in roots tips.

Its subcellular location is the nucleus. Its function is as follows. Transcription factor that binds to DNA in promoters cis-regulatory element 5'-GGCGCGC-3' of cell cycle genes, including cyclins, cyclin-dependent kinases (CDKs), and components of the pre-replication complex. Binds to DNA in promoters cis-regulatory element 5'-AGCCG-3' of auxin regulated genes (e.g. PIN3 and PIN7). Together with FAMA and MYB88, ensures that stomata contain just two guard cells (GCs) by enforcing a single symmetric precursor cell division before stomatal maturity. Represses the expression of the mitosis-inducing factors CDKB1-1 and CDKA-1, specifically required for the last guard mother cells (GMC) symmetric divisions in the stomatal pathway. Represses CYCA2-3 in newly formed guard cells. Together with MYB88, regulates stomata spacing by restricting divisions late in the stomatal cell lineage thus limiting the number of GMC divisions. In collaboration with CDKB1-1 and CDKB1-2, restrict the G1/S transition and chloroplast and nuclear number during stomatal formation, and normally maintain fate and developmental progression throughout the stomatal cell lineage. Also involved in the shape regulation of pavement cells. Involved in sensing and/or transducing abiotic stress (e.g. drought and salt), probably via the positive regulation of NAC019. Regulates female reproduction being required for entry into megasporogenesis, probably via the regulation of cell cycle genes. Promotes histone H3K27me3 marks and represses stem cell gene expression. Required for lateral roots (LRs) initiation via the regulation of PIN3 expression in an auxin-dependent manner. Involved in responses to gravity stimulation in primary roots by regulating the transcription of PIN3 and PIN7 in gravity-sensing cells, thus modulating auxin asymmetric redistribution. The polypeptide is Transcription factor MYB124 (Arabidopsis thaliana (Mouse-ear cress)).